A 700-amino-acid polypeptide reads, in one-letter code: AP-2 complex subunit beta (700 aa).

The tract at residues 625-700 (VGNSFPPTGA…RKLSMKRPFS (76 aa)) is disordered. At serine 649 the chain carries Phosphoserine. The residue at position 652 (threonine 652) is a Phosphothreonine. Over residues 653–663 (AMMDDYDKPAE) the composition is skewed to basic and acidic residues. At serine 683 the chain carries Phosphoserine.

The protein belongs to the adaptor complexes large subunit family. As to quaternary structure, adaptor protein complex 2 (AP-2) is a heterotetramer composed of two large adaptins (alpha-type subunit APL3 and beta-type subunit APL1), a medium chain (mu-type subunit APM4) and a small adaptin (sigma-type subunit APS2). Interacts with APS2.

The protein localises to the cell membrane. It localises to the membrane. The protein resides in the coated pit. Adaptins are components of the adaptor complexes which link clathrin to receptors in coated vesicles. Clathrin-associated protein complexes are believed to interact with the cytoplasmic tails of membrane proteins, leading to their selection and concentration. Beta adaptin is a subunit of the plasma membrane adaptor. This chain is AP-2 complex subunit beta (APL1), found in Saccharomyces cerevisiae (strain ATCC 204508 / S288c) (Baker's yeast).